Consider the following 395-residue polypeptide: Acetate kinase (395 aa).

Asparagine 7 contributes to the Mg(2+) binding site. Lysine 14 is a binding site for ATP. Position 88 (arginine 88) interacts with substrate. The Proton donor/acceptor role is filled by aspartate 145. ATP is bound by residues 205–209, 279–281, and 327–331; these read HLGNG, DFR, and GIGEN. Glutamate 381 is a Mg(2+) binding site.

It belongs to the acetokinase family. As to quaternary structure, homodimer. The cofactor is Mg(2+). Requires Mn(2+) as cofactor.

The protein resides in the cytoplasm. It carries out the reaction acetate + ATP = acetyl phosphate + ADP. Its pathway is metabolic intermediate biosynthesis; acetyl-CoA biosynthesis; acetyl-CoA from acetate: step 1/2. In terms of biological role, catalyzes the formation of acetyl phosphate from acetate and ATP. Can also catalyze the reverse reaction. This Campylobacter jejuni subsp. jejuni serotype O:6 (strain 81116 / NCTC 11828) protein is Acetate kinase.